The following is a 542-amino-acid chain: Gamma-terpinene synthase 1 (542 aa).

Positions 295 and 299 each coordinate Mn(2+). Positions 295–299 (DDVYD) match the DDXXD motif motif. Homodimerization regions lie at residues 301 to 307 (YDTLDEL) and 373 to 410 (EAKW…FTLP). Mn(2+) is bound by residues Asp439 and Glu447.

The protein belongs to the terpene synthase family. As to quaternary structure, homodimer. Requires Mn(2+) as cofactor. Mg(2+) is required as a cofactor. In terms of tissue distribution, mostly expressed in flowers and, to a lower extent, in leaves, especially in glandular trichomes.

It carries out the reaction (2E)-geranyl diphosphate = gamma-terpinene + diphosphate. The catalysed reaction is (2E)-geranyl diphosphate = alpha-terpinene + diphosphate. It functions in the pathway secondary metabolite biosynthesis; terpenoid biosynthesis. Involved in the biosynthesis of phenolic monoterpenes natural products thymol and carvacrol which have a broad range of biological activities acting as antimicrobial compounds, insecticides, antioxidants and pharmaceutical agents. Monoterpene synthase which catalyzes the conversion of geranyl diphosphate (GPP) to gamma-terpinene and the minor products alpha-thujene, alpha-terpinene, myrcene, sabinene, (+)-R-limonene, alpha-pinene and alpha-phellandrene. This Thymus vulgaris (Thyme) protein is Gamma-terpinene synthase 1.